The primary structure comprises 382 residues: 1-deoxy-D-xylulose 5-phosphate reductoisomerase (382 aa).

NADPH is bound by residues Thr10, Gly11, Ser12, Ile13, Gly36, and Asn122. Residue Lys123 coordinates 1-deoxy-D-xylulose 5-phosphate. Glu124 is a binding site for NADPH. Asp148 is a binding site for Mn(2+). 1-deoxy-D-xylulose 5-phosphate is bound by residues Ser149, Glu150, Ser174, and His197. Glu150 provides a ligand contact to Mn(2+). Gly203 contributes to the NADPH binding site. Positions 210, 215, 216, and 219 each coordinate 1-deoxy-D-xylulose 5-phosphate. Glu219 contacts Mn(2+).

It belongs to the DXR family. Mg(2+) serves as cofactor. Requires Mn(2+) as cofactor.

The catalysed reaction is 2-C-methyl-D-erythritol 4-phosphate + NADP(+) = 1-deoxy-D-xylulose 5-phosphate + NADPH + H(+). The protein operates within isoprenoid biosynthesis; isopentenyl diphosphate biosynthesis via DXP pathway; isopentenyl diphosphate from 1-deoxy-D-xylulose 5-phosphate: step 1/6. Catalyzes the NADPH-dependent rearrangement and reduction of 1-deoxy-D-xylulose-5-phosphate (DXP) to 2-C-methyl-D-erythritol 4-phosphate (MEP). The polypeptide is 1-deoxy-D-xylulose 5-phosphate reductoisomerase (Pelodictyon phaeoclathratiforme (strain DSM 5477 / BU-1)).